The primary structure comprises 228 residues: Sec-independent protein translocase protein TatB (228 aa).

A helical transmembrane segment spans residues 1 to 21; that stretch reads MFDFGLGELVFVGIIALIVLG. Disordered regions lie at residues 126–162 and 196–228; these read LSDGISDVMPSERSDTSAEILGDSGQTGSTAEPAETD and VPHTTSLRKQAISRKRGLRPKHRAKPKLRVRKS. Basic residues predominate over residues 206-228; it reads AISRKRGLRPKHRAKPKLRVRKS.

This sequence belongs to the TatB family. The Tat system comprises two distinct complexes: a TatABC complex, containing multiple copies of TatA, TatB and TatC subunits, and a separate TatA complex, containing only TatA subunits. Substrates initially bind to the TatABC complex, which probably triggers association of the separate TatA complex to form the active translocon.

It is found in the cell inner membrane. In terms of biological role, part of the twin-arginine translocation (Tat) system that transports large folded proteins containing a characteristic twin-arginine motif in their signal peptide across membranes. Together with TatC, TatB is part of a receptor directly interacting with Tat signal peptides. TatB may form an oligomeric binding site that transiently accommodates folded Tat precursor proteins before their translocation. This Neisseria meningitidis serogroup C / serotype 2a (strain ATCC 700532 / DSM 15464 / FAM18) protein is Sec-independent protein translocase protein TatB.